Reading from the N-terminus, the 209-residue chain is Hydrogenase expression/formation protein HupM (209 aa).

Residues glutamate 21, aspartate 67, and histidine 98 each contribute to the Ni(2+) site.

Belongs to the peptidase A31 family.

Not known. Could be involved in the processing of hydrogenase. The sequence is that of Hydrogenase expression/formation protein HupM (hupM) from Azotobacter chroococcum mcd 1.